The sequence spans 134 residues: Translation initiation factor 2 subunit beta (134 aa).

Belongs to the eIF-2-beta/eIF-5 family. Heterotrimer composed of an alpha, a beta and a gamma chain.

Functionally, eIF-2 functions in the early steps of protein synthesis by forming a ternary complex with GTP and initiator tRNA. This is Translation initiation factor 2 subunit beta from Pyrobaculum arsenaticum (strain DSM 13514 / JCM 11321 / PZ6).